The primary structure comprises 278 residues: Ribosomal RNA small subunit methyltransferase A (278 aa).

The S-adenosyl-L-methionine site is built by Asn-27, Leu-29, Gly-54, Glu-75, Asp-95, and Asn-118.

It belongs to the class I-like SAM-binding methyltransferase superfamily. rRNA adenine N(6)-methyltransferase family. RsmA subfamily.

It localises to the cytoplasm. The catalysed reaction is adenosine(1518)/adenosine(1519) in 16S rRNA + 4 S-adenosyl-L-methionine = N(6)-dimethyladenosine(1518)/N(6)-dimethyladenosine(1519) in 16S rRNA + 4 S-adenosyl-L-homocysteine + 4 H(+). In terms of biological role, specifically dimethylates two adjacent adenosines (A1518 and A1519) in the loop of a conserved hairpin near the 3'-end of 16S rRNA in the 30S particle. May play a critical role in biogenesis of 30S subunits. The protein is Ribosomal RNA small subunit methyltransferase A of Chlamydia abortus (strain DSM 27085 / S26/3) (Chlamydophila abortus).